The following is a 423-amino-acid chain: Zinc transporter ZIP13 (423 aa).

At 1–15 the chain is on the lumenal side; the sequence is MPGCPCPGIGMAGQR. The chain crosses the membrane as a helical span at residues 16-36; the sequence is LLFLAALALELLGGAGGSQQA. Residues 37–68 are Cytoplasmic-facing; that stretch reads LRSRGVAAACRLDSKESESWGALLSGERLETW. Residues 69–89 traverse the membrane as a helical segment; the sequence is ICSLLGSLMVGLSGVFPLLVI. Residues 90 to 108 are Lumenal-facing; that stretch reads PLEMGTTLRSEAGARRLKQ. A helical membrane pass occupies residues 109–129; that stretch reads LLSFALGGLLGNVFLHLLPEA. Over 130 to 149 the chain is Cytoplasmic; sequence WAYTNSASSGGERQSLQQQQ. The chain crosses the membrane as a helical span at residues 150-170; the sequence is QLGLWVIAGFLTFLVLEKLFF. Over 171–235 the chain is Lumenal; the sequence is DSKGKEETSQ…TIDNFTHGLA (65 aa). The chain crosses the membrane as a helical span at residues 236–256; that stretch reads VAASFLVSKKIGLLTTMAILL. Positions 257–262 match the XEXPHE-motif motif; the sequence is HEIPHE. Over 257–278 the chain is Cytoplasmic; that stretch reads HEIPHEVGDFAILLRAGFDRWS. The chain crosses the membrane as a helical span at residues 279 to 299; the sequence is AAKLQLSTALGGLLGACFAIC. Topologically, residues 300 to 368 are lumenal; it reads AQSPKGVGTG…RAPPPATEET (69 aa). The chain crosses the membrane as a helical span at residues 369–389; it reads VAWILPFTSGGFLYIALVNVL. The Cytoplasmic segment spans residues 390 to 401; it reads PDLLEEDDPWRS. A helical transmembrane segment spans residues 402–422; that stretch reads LQQVLLLCAGIVVMVLFSVFV. A topological domain (lumenal) is located at residue E423.

It belongs to the ZIP transporter (TC 2.A.5) family. In terms of assembly, homodimer.

The protein localises to the golgi apparatus membrane. It localises to the cytoplasmic vesicle membrane. The protein resides in the endoplasmic reticulum membrane. The enzyme catalyses Zn(2+)(in) = Zn(2+)(out). Functionally, functions as a zinc transporter transporting Zn(2+) from the Golgi apparatus to the cytosol and thus influences the zinc level at least in areas of the cytosol. May regulate beige adipocyte differentiation. The chain is Zinc transporter ZIP13 from Bos taurus (Bovine).